Here is a 121-residue protein sequence, read N- to C-terminus: Prefoldin subunit beta (121 aa).

Belongs to the prefoldin subunit beta family. As to quaternary structure, heterohexamer of two alpha and four beta subunits.

Its subcellular location is the cytoplasm. Its function is as follows. Molecular chaperone capable of stabilizing a range of proteins. Seems to fulfill an ATP-independent, HSP70-like function in archaeal de novo protein folding. The sequence is that of Prefoldin subunit beta (pfdB) from Methanothermobacter thermautotrophicus (strain ATCC 29096 / DSM 1053 / JCM 10044 / NBRC 100330 / Delta H) (Methanobacterium thermoautotrophicum).